The primary structure comprises 434 residues: Indole diterpene prenyltransferase nodD2 (434 aa).

L-tryptophan-binding positions include 85 to 86 (LI) and E94. Positions 107, 194, 268, 270, 272, 351, 353, 418, and 422 each coordinate substrate.

This sequence belongs to the tryptophan dimethylallyltransferase family.

It participates in secondary metabolite biosynthesis. In terms of biological role, indole diterpene prenyltransferase; part of the gene cluster that mediates the biosynthesis of the indole diterpenes nodulisporic acids (NA). Nodulisporic acid A (NAA) and its chemically modified derivatives are of particular significance because of their highly potent insecticidal activity against blood-feeding arthropods and lack of observable adverse effects on mammals, in particular the tremogenicity associated with the paspaline-derived IDTs is not observed. The geranylgeranyl diphosphate (GGPP) synthase ggs1, localized outside of the cluster, is proposed to catalyze the first step in nodulisporic acid biosynthesis via conversion of farnesyl pyrophosphate and isopentyl pyrophosphate into geranylgeranyl pyrophosphate (GGPP). Condensation of indole-3-glycerol phosphate with GGPP by the prenyl transferase nodC then forms 3-geranylgeranylindole (3-GGI). Epoxidation by the FAD-dependent monooxygenase nodM leads to a single-epoxidized-GGI that is substrate of the terpene cyclase nodB for cyclization to yield emindole SB. The terminal methyl carbon, C28, of emindole SB is then oxidized by the cytochrome P450 monooxygenase nodW to produce nodulisporic acid F (NAF), the pentacyclic core of NAA. NAF is converted to nodulisporic acid E (NAE) via prenylation. This step is probably performed by one of the indole diterpene prenyltransferases nodD1 or nodD2. Several oxidation steps performed by the FAD-linked oxidoreductase nodO and one of the cytochrome P450 monooxygenase nodR, nodX or nodZ further convert NAE to nodulisporic acid D (NAD). NAD is substrate of cytochrome P450 monooxygenase nodJ to produce the precursor of nodulisporic acid C (NAC), converted to NAC by one of the indole diterpene prenyltransferases nodD1 or nodD2. The FAD-dependent monooxygenase nodY2 then oxidizes NAC to nodulisporic acid B (NAB). Finally NAB is converted to NAA by one of the cytochrome P450 monooxygenases nodR, nodX or nodZ. This Hypoxylon pulicicidum protein is Indole diterpene prenyltransferase nodD2.